The chain runs to 335 residues: Probable cytosolic iron-sulfur protein assembly protein Ciao1 (335 aa).

WD repeat units follow at residues 12 to 51 (GHKG…WSTK), 57 to 96 (GHKR…FECN), 101 to 140 (GHEN…EFEC), 146 to 185 (PHTQ…SDWD), 192 to 231 (SHTS…NDAG), 250 to 289 (QHSR…KRDE), and 301 to 335 (AHEQ…KMLD).

The protein belongs to the WD repeat CIA1 family.

Functionally, essential component of the cytosolic iron-sulfur (Fe/S) protein assembly machinery. Required for the maturation of extramitochondrial Fe/S proteins. The chain is Probable cytosolic iron-sulfur protein assembly protein Ciao1 from Drosophila willistoni (Fruit fly).